The primary structure comprises 433 residues: CinA-like protein (433 aa).

This sequence belongs to the CinA family.

This chain is CinA-like protein, found in Prochlorococcus marinus subsp. pastoris (strain CCMP1986 / NIES-2087 / MED4).